Consider the following 188-residue polypeptide: Peptidyl-tRNA hydrolase (188 aa).

Y14 is a binding site for tRNA. H19 (proton acceptor) is an active-site residue. TRNA is bound by residues Y64, N66, and N113.

It belongs to the PTH family. In terms of assembly, monomer.

Its subcellular location is the cytoplasm. The catalysed reaction is an N-acyl-L-alpha-aminoacyl-tRNA + H2O = an N-acyl-L-amino acid + a tRNA + H(+). Functionally, hydrolyzes ribosome-free peptidyl-tRNAs (with 1 or more amino acids incorporated), which drop off the ribosome during protein synthesis, or as a result of ribosome stalling. In terms of biological role, catalyzes the release of premature peptidyl moieties from peptidyl-tRNA molecules trapped in stalled 50S ribosomal subunits, and thus maintains levels of free tRNAs and 50S ribosomes. This chain is Peptidyl-tRNA hydrolase, found in Chloroflexus aurantiacus (strain ATCC 29364 / DSM 637 / Y-400-fl).